The sequence spans 486 residues: Glutamyl-tRNA(Gln) amidotransferase subunit A (486 aa).

Active-site charge relay system residues include Lys78 and Ser153. Ser177 serves as the catalytic Acyl-ester intermediate.

Belongs to the amidase family. GatA subfamily. Heterotrimer of A, B and C subunits.

The catalysed reaction is L-glutamyl-tRNA(Gln) + L-glutamine + ATP + H2O = L-glutaminyl-tRNA(Gln) + L-glutamate + ADP + phosphate + H(+). In terms of biological role, allows the formation of correctly charged Gln-tRNA(Gln) through the transamidation of misacylated Glu-tRNA(Gln) in organisms which lack glutaminyl-tRNA synthetase. The reaction takes place in the presence of glutamine and ATP through an activated gamma-phospho-Glu-tRNA(Gln). The chain is Glutamyl-tRNA(Gln) amidotransferase subunit A from Ruminiclostridium cellulolyticum (strain ATCC 35319 / DSM 5812 / JCM 6584 / H10) (Clostridium cellulolyticum).